The chain runs to 1029 residues: Exportin-T (1029 aa).

The protein belongs to the exportin family.

It localises to the nucleus. It is found in the cytoplasm. Functionally, tRNA nucleus export receptor which facilitates tRNA translocation across the nuclear pore complex. Involved in pre-tRNA splicing, probably by affecting the interaction of pre-tRNA with splicing endonuclease. This chain is Exportin-T (los1), found in Aspergillus clavatus (strain ATCC 1007 / CBS 513.65 / DSM 816 / NCTC 3887 / NRRL 1 / QM 1276 / 107).